The chain runs to 145 residues: Protoporphyrinogen IX oxidase (145 aa).

4 helical membrane-spanning segments follow: residues 6-26, 61-81, 83-103, and 123-143; these read LWFK…LLYL, AMIS…FVAL, TWFQ…GLLA, and IVNE…IVKP. Histidine 12 is a binding site for heme. Heme is bound at residue lysine 88.

Belongs to the HemJ family. In terms of assembly, homodimer. Heme b serves as cofactor.

The protein resides in the cell membrane. It catalyses the reaction protoporphyrinogen IX + 3 A = protoporphyrin IX + 3 AH2. It participates in porphyrin-containing compound metabolism; protoporphyrin-IX biosynthesis; protoporphyrin-IX from protoporphyrinogen-IX: step 1/1. Functionally, catalyzes the oxidation of protoporphyrinogen IX to protoporphyrin IX. Is involved in the biosynthesis of tetrapyrrole molecules like heme. Does not use oxygen or artificial electron acceptors such as menadione or benzoquinone. In Rickettsia prowazekii (strain Madrid E), this protein is Protoporphyrinogen IX oxidase.